The chain runs to 51 residues: uncharacterized protein (51 aa).

The segment at 1–42 (MKMKTNKYMNMVRPAPPRRADPEGVRDPSTMGGGPNPFLRRS) is disordered.

The protein resides in the mitochondrion. This is an uncharacterized protein from Saccharomyces cerevisiae (strain ATCC 204508 / S288c) (Baker's yeast).